The primary structure comprises 318 residues: Aspartate carbamoyltransferase catalytic subunit (318 aa).

Carbamoyl phosphate-binding residues include Arg-58 and Thr-59. Residue Lys-86 coordinates L-aspartate. Carbamoyl phosphate-binding residues include Arg-108, His-141, and Gln-144. L-aspartate is bound by residues Arg-174 and Arg-226. The carbamoyl phosphate site is built by Gly-270 and Pro-271.

It belongs to the aspartate/ornithine carbamoyltransferase superfamily. ATCase family. Heterododecamer (2C3:3R2) of six catalytic PyrB chains organized as two trimers (C3), and six regulatory PyrI chains organized as three dimers (R2).

It catalyses the reaction carbamoyl phosphate + L-aspartate = N-carbamoyl-L-aspartate + phosphate + H(+). It participates in pyrimidine metabolism; UMP biosynthesis via de novo pathway; (S)-dihydroorotate from bicarbonate: step 2/3. In terms of biological role, catalyzes the condensation of carbamoyl phosphate and aspartate to form carbamoyl aspartate and inorganic phosphate, the committed step in the de novo pyrimidine nucleotide biosynthesis pathway. The chain is Aspartate carbamoyltransferase catalytic subunit from Lactobacillus delbrueckii subsp. bulgaricus (strain ATCC 11842 / DSM 20081 / BCRC 10696 / JCM 1002 / NBRC 13953 / NCIMB 11778 / NCTC 12712 / WDCM 00102 / Lb 14).